Here is a 254-residue protein sequence, read N- to C-terminus: 4-hydroxy-tetrahydrodipicolinate reductase (254 aa).

7 to 12 (GASGRI) contributes to the NAD(+) binding site. Arg35 lines the NADP(+) pocket. Residues 91 to 93 (GTT) and 115 to 118 (AHNM) each bind NAD(+). Catalysis depends on His147, which acts as the Proton donor/acceptor. Residue His148 coordinates (S)-2,3,4,5-tetrahydrodipicolinate. Catalysis depends on Lys151, which acts as the Proton donor. 157 to 158 (GT) contributes to the (S)-2,3,4,5-tetrahydrodipicolinate binding site.

The protein belongs to the DapB family.

It is found in the cytoplasm. It catalyses the reaction (S)-2,3,4,5-tetrahydrodipicolinate + NAD(+) + H2O = (2S,4S)-4-hydroxy-2,3,4,5-tetrahydrodipicolinate + NADH + H(+). It carries out the reaction (S)-2,3,4,5-tetrahydrodipicolinate + NADP(+) + H2O = (2S,4S)-4-hydroxy-2,3,4,5-tetrahydrodipicolinate + NADPH + H(+). Its pathway is amino-acid biosynthesis; L-lysine biosynthesis via DAP pathway; (S)-tetrahydrodipicolinate from L-aspartate: step 4/4. Its function is as follows. Catalyzes the conversion of 4-hydroxy-tetrahydrodipicolinate (HTPA) to tetrahydrodipicolinate. The sequence is that of 4-hydroxy-tetrahydrodipicolinate reductase from Helicobacter pylori (strain P12).